The chain runs to 129 residues: UPF0325 protein Ent638_0703 (129 aa).

The protein belongs to the UPF0325 family.

The protein is UPF0325 protein Ent638_0703 of Enterobacter sp. (strain 638).